Reading from the N-terminus, the 384-residue chain is Homoserine O-succinyltransferase (384 aa).

Residues 51–361 (NAILICHALS…ETSQGHDAFL (311 aa)) enclose the AB hydrolase-1 domain. Catalysis depends on serine 157, which acts as the Nucleophile. Position 227 (arginine 227) interacts with substrate. Active-site residues include aspartate 324 and histidine 357. Aspartate 358 is a binding site for substrate.

This sequence belongs to the AB hydrolase superfamily. MetX family. In terms of assembly, homodimer.

It localises to the cytoplasm. The enzyme catalyses L-homoserine + succinyl-CoA = O-succinyl-L-homoserine + CoA. The protein operates within amino-acid biosynthesis; L-methionine biosynthesis via de novo pathway; O-succinyl-L-homoserine from L-homoserine: step 1/1. Its function is as follows. Transfers a succinyl group from succinyl-CoA to L-homoserine, forming succinyl-L-homoserine. This is Homoserine O-succinyltransferase from Alkalilimnicola ehrlichii (strain ATCC BAA-1101 / DSM 17681 / MLHE-1).